Reading from the N-terminus, the 492-residue chain is MATFKDACFHYRKITKLNRELLRIGANSVWIPVSSNKIKGWCIECCQLTELTFCHGCSLAHVCQWCIQNKRCFLDNEPHLLKLRSFESPITKEKLQCIIDLYNLLFPINPGIINRFKKIVNQRKCRNEFEQSWYNQLLFPITLNAAVFKFHSREVYVFGLYEGSSSCIDLPYRIVNCIDLYDRLLLDQINFERMSSLPASLQSVYANKYFKLSRLPSMKLKQIYYSDFSKQNLINKCKIKSRIVLRNLTEFTWDSQVSLHNDVINNKEKILTALSTSSLKRFETHDLNLGRVKADIFELGHHCKPNYISSNHWQPASKVSQCRWCNVKYVFRNMDWKMESMYNELLSFIQACYKSNVNVGNCSSIESAYPLVKDMLWHSITKYIDQTIEKLFNVMNPVKVDGQQVISFHWQIDVALYIHIKMILKTETLPFAFTLNQFRSIIKGIVNQWYDVTELDYLPLCTEQTDKLVKLEEEGKISEEHELLISDSEDDD.

Residues 1–81 (MATFKDACFH…CFLDNEPHLL (81 aa)) are RNA-binding. The interval 42–79 (CIECCQLTELTFCHGCSLAHVCQWCIQNKRCFLDNEPH) is zinc-binding domain. Residues 82-176 (KLRSFESPIT…CIDLPYRIVN (95 aa)) are important for cytoskeleton localization. The segment at 318–492 (KVSQCRWCNV…LLISDSEDDD (175 aa)) is interaction with host IRF3. The short motif at 483–486 (LLIS) is the pLxIS motif element.

This sequence belongs to the rotavirus NSP1 family. Interacts (via C-terminus) with host IRF3; this interaction leads to IRF3 degradation. Interacts with host IRF7; this interaction leads to IRF7 degradation. Interacts with host CUL1 and CUL3.

The protein resides in the host cytoplasm. It localises to the host cytoskeleton. Its function is as follows. Plays a role in the inhibition of host innate immunity by inducing the degradation of key host factors required to activate interferon production such as IRF3, IRF5 or IRF7. Associates with components of cullin RING ligases (CRLs) including CUL1 or CUL3, which are essential multisubunit ubiquitination complexes, to modulate their activities. This is Non-structural protein 1 from Rotavirus A (isolate RVA/Cat/Japan/FRV64/1989/G3P5B[3]) (RV-A).